The following is a 370-amino-acid chain: Formate dehydrogenase (370 aa).

2 residues coordinate substrate: isoleucine 94 and asparagine 120. Residues 175–176, aspartate 196, 231–235, threonine 257, aspartate 283, and 312–315 contribute to the NAD(+) site; these read RI, PLHES, and HMSG.

This sequence belongs to the D-isomer specific 2-hydroxyacid dehydrogenase family. FDH subfamily. In terms of assembly, homodimer.

The protein localises to the cytoplasm. It catalyses the reaction formate + NAD(+) = CO2 + NADH. Functionally, catalyzes the NAD(+)-dependent oxidation of formate to carbon dioxide. Formate oxidation is the final step in the methanol oxidation pathway in methylotrophic microorganisms. Has a role in the detoxification of exogenous formate in non-methylotrophic organisms. In Chaetomium thermophilum (strain DSM 1495 / CBS 144.50 / IMI 039719) (Thermochaetoides thermophila), this protein is Formate dehydrogenase.